Here is a 303-residue protein sequence, read N- to C-terminus: Diaminopimelate epimerase (303 aa).

Substrate is bound by residues Asn-15, Gln-47, and Asn-67. Cys-76 functions as the Proton donor in the catalytic mechanism. Residues 77–78 (GN), Asn-163, Asn-197, and 215–216 (ER) each bind substrate. Cys-224 serves as the catalytic Proton acceptor. 225 to 226 (GS) contributes to the substrate binding site.

This sequence belongs to the diaminopimelate epimerase family. In terms of assembly, homodimer.

The protein resides in the cytoplasm. The enzyme catalyses (2S,6S)-2,6-diaminopimelate = meso-2,6-diaminopimelate. The protein operates within amino-acid biosynthesis; L-lysine biosynthesis via DAP pathway; DL-2,6-diaminopimelate from LL-2,6-diaminopimelate: step 1/1. Functionally, catalyzes the stereoinversion of LL-2,6-diaminopimelate (L,L-DAP) to meso-diaminopimelate (meso-DAP), a precursor of L-lysine and an essential component of the bacterial peptidoglycan. This Allorhizobium ampelinum (strain ATCC BAA-846 / DSM 112012 / S4) (Agrobacterium vitis (strain S4)) protein is Diaminopimelate epimerase.